The sequence spans 312 residues: Protein Rep40 (312 aa).

The SF3 helicase domain occupies 84-239 (DPQYAASVFL…LDHDFGKVTK (156 aa)). ATP is bound at residue 110 to 117 (GPATTGKT). A disordered region spans residues 264-301 (KGGAKKRPAPSDADISEPKRVRESVAQPSTSDAEASIN).

As to quaternary structure, homooligomer.

The protein resides in the host nucleus. The catalysed reaction is ATP + H2O = ADP + phosphate + H(+). In terms of biological role, plays a critical role during packaging of viral DNA into empty capsids, where they are thought to be part of the packaging motor complex. The single stranded genomic DNA is packaged in a 3' to 5' direction and requires the association of viral DNA with Rep40. The chain is Protein Rep40 (Rep40) from Mammalia (AAV-2).